The sequence spans 446 residues: Cyclin-T1-1 (446 aa).

It belongs to the cyclin family. Cyclin T subfamily.

This is Cyclin-T1-1 (CYCT1-1) from Oryza sativa subsp. japonica (Rice).